We begin with the raw amino-acid sequence, 380 residues long: Cytochrome b (380 aa).

4 consecutive transmembrane segments (helical) span residues 33 to 53 (FGSL…FLAM), 77 to 98 (WLIR…YLHV), 113 to 133 (WNIG…GYVL), and 178 to 198 (FFAF…IHLL). Heme b is bound by residues H83 and H97. Heme b contacts are provided by H182 and H196. H201 is an a ubiquinone binding site. The next 4 helical transmembrane spans lie at 226–246 (YKDL…ALFS), 288–308 (LGGV…PMLH), 320–340 (LSQI…WIGG), and 347–367 (FVLI…IALP).

Belongs to the cytochrome b family. The cytochrome bc1 complex contains 3 respiratory subunits (MT-CYB, CYC1 and UQCRFS1), 2 core proteins (UQCRC1 and UQCRC2) and probably 6 low-molecular weight proteins. Heme b serves as cofactor.

The protein resides in the mitochondrion inner membrane. Component of the ubiquinol-cytochrome c reductase complex (complex III or cytochrome b-c1 complex) that is part of the mitochondrial respiratory chain. The b-c1 complex mediates electron transfer from ubiquinol to cytochrome c. Contributes to the generation of a proton gradient across the mitochondrial membrane that is then used for ATP synthesis. The sequence is that of Cytochrome b (mt-cyb) from Acipenser persicus (Persian sturgeon).